The primary structure comprises 644 residues: MHWTPEHAQPLNQWPEQHLDVSSTTPSPAHKLELPPGGRQRCHYAWAHDDISALTASNLLKRYAEKYSGVLDYERPGLGSYGDAAFLNGAKGDPEPWPGPEPPYPLASLHEGLPGAKAAGAGGSAGLGGSPVVAGNLTEPLYTGNACGGPSAATEYAAGYGGGYLASGYCAQTSAALAPPPPPALLQPAPPPGYGPSAPLYNYPAAGYAAQPGYGALPPPAAPPAPYLPSGLAAPTPLPAPAPPRPAPYGFPAAAEGVSLKRKAVDEGAEARYRKYAYEPAKAPAADGASYPAADDTECRGNGFRSKPPGATEDGTGKYGGGGPLKVLGSPAYAPQLEPFDKFPERVPAAHGGFAEPSGEPAKGVDPGALELVSSKMVDCGPPVQWADVAGQGALKAALEEELLWPLLRPPACPGSALPPRTVLFFGPRGCGKALLGRCLATRLGATLLRLRGAGLAASGAVEGARLLQAAFAAARCRPPAVLLISELDALLPARDDGASLRAPLLTCLDGSCGARADGVLVVGTTSRPAALDEATRRRFALRFYVALPDGAARGQILQRALAQQGCALNERELAALVQGTQGFSGGELGQLCQQAAAEAGISGLQRPLSYKDVEAALAKVGSRAPSKELDSLVEWDKMYGSGH.

Disordered regions lie at residues 1-36 and 285-323; these read MHWT…ELPP and AADG…GGGG. The segment covering 10-27 has biased composition (polar residues); that stretch reads PLNQWPEQHLDVSSTTPS. Over residues 285 to 294 the composition is skewed to low complexity; sequence AADGASYPAA. Residues Ala390 and 430–435 each bind ATP; that span reads GCGKAL.

The protein belongs to the AAA ATPase family. It depends on Mg(2+) as a cofactor.

It is found in the cytoplasm. The protein localises to the cell cortex. The catalysed reaction is ATP + H2O = ADP + phosphate + H(+). Its function is as follows. Microtubule-severing enzyme that negatively regulates cell migration and wound healing. In migrating cells, targets dynamic microtubules (MTs) at the leading edge and severs them, thereby suppressing motility. Microtubule severing releases ARHGEF2 which activates RHOA, which in turn regulates focal ahesion turnover via focal adhesion kinase, as opposed to F-actin polymerization, to suppress cell motility. Negative regulator of axon regeneration that suppresses axonal growth by selectively severing dynamic MTs in the distal axon shaft and growth cone. Contributes to proper cell branching during endothelial and neuronal development. The polypeptide is Fidgetin-like protein 2 (Fignl2) (Mus musculus (Mouse)).